Consider the following 123-residue polypeptide: F-box protein PP2-B3 (123 aa).

In terms of domain architecture, F-box spans 10–56; sequence PSPFDGLPENCISNIISFTTPRDACFAASVSKAFESAVQSDSVWEKF.

The sequence is that of F-box protein PP2-B3 (PP2B3) from Arabidopsis thaliana (Mouse-ear cress).